Here is a 176-residue protein sequence, read N- to C-terminus: NAD(P)H-quinone oxidoreductase subunit 6, chloroplastic (176 aa).

A run of 5 helical transmembrane segments spans residues 10-30, 32-52, 61-81, 92-112, and 152-172; these read FLLVFLGSGLLVGGLGVVLLP, PIFSAFSLGFVLVCISLLYIL, AQLLIYVGAINVLIIFAVMFM, LWTIGNGITSLVCTTILFLLM, and FFLPFELISIILLVALIGAIS.

It belongs to the complex I subunit 6 family. As to quaternary structure, NDH is composed of at least 16 different subunits, 5 of which are encoded in the nucleus.

It localises to the plastid. The protein resides in the chloroplast thylakoid membrane. The catalysed reaction is a plastoquinone + NADH + (n+1) H(+)(in) = a plastoquinol + NAD(+) + n H(+)(out). It catalyses the reaction a plastoquinone + NADPH + (n+1) H(+)(in) = a plastoquinol + NADP(+) + n H(+)(out). Its function is as follows. NDH shuttles electrons from NAD(P)H:plastoquinone, via FMN and iron-sulfur (Fe-S) centers, to quinones in the photosynthetic chain and possibly in a chloroplast respiratory chain. The immediate electron acceptor for the enzyme in this species is believed to be plastoquinone. Couples the redox reaction to proton translocation, and thus conserves the redox energy in a proton gradient. In Arabidopsis thaliana (Mouse-ear cress), this protein is NAD(P)H-quinone oxidoreductase subunit 6, chloroplastic (ndhG).